Consider the following 292-residue polypeptide: ATP synthase gamma chain (292 aa).

The protein belongs to the ATPase gamma chain family. In terms of assembly, F-type ATPases have 2 components, CF(1) - the catalytic core - and CF(0) - the membrane proton channel. CF(1) has five subunits: alpha(3), beta(3), gamma(1), delta(1), epsilon(1). CF(0) has three main subunits: a, b and c.

It localises to the cell inner membrane. Its function is as follows. Produces ATP from ADP in the presence of a proton gradient across the membrane. The gamma chain is believed to be important in regulating ATPase activity and the flow of protons through the CF(0) complex. This is ATP synthase gamma chain from Rhodopseudomonas palustris (strain BisB18).